A 309-amino-acid polypeptide reads, in one-letter code: Olfactory receptor 2AP1 (309 aa).

Over 1 to 23 (MKNKTVLTEFILLGLTDVPELQV) the chain is Extracellular. N-linked (GlcNAc...) asparagine glycosylation occurs at N3. The chain crosses the membrane as a helical span at residues 24-47 (AVFTFLFLAYLLSILGNLTILILT). Topologically, residues 48–55 (LLDSHLQT) are cytoplasmic. The helical transmembrane segment at 56-77 (PMYFFLRNFSFLEISFTNIFIP) threads the bilayer. The Extracellular portion of the chain corresponds to 78-98 (RVLISITTGNKSISFAGCFTQ). N87 is a glycosylation site (N-linked (GlcNAc...) asparagine). Residues C95 and C187 are joined by a disulfide bond. A helical transmembrane segment spans residues 99–118 (YFFAMFLGATEFYLLAAMSY). Residues 119–137 (DRYVAICKPLHYTTIMSSR) lie on the Cytoplasmic side of the membrane. Residues 138–156 (ICIQLIFCSWLGGLMAIIP) form a helical membrane-spanning segment. Topologically, residues 157–193 (TITLMSQQDFCASNRLNHYFCDYEPLLELSCSDTSLI) are extracellular. A helical membrane pass occupies residues 194–217 (EKVVFLVASVTLVVTLVLVILSYA). Residues 218–234 (FIIKTILKLPSAQQRTK) lie on the Cytoplasmic side of the membrane. A helical transmembrane segment spans residues 235–257 (AFSTCSSHMIVISLSYGSCMFMY). Residues 258–270 (INPSAKEGDTFNK) lie on the Extracellular side of the membrane. A helical transmembrane segment spans residues 271–290 (GVALLITSVAPLLNPFIYTL). Topologically, residues 291–309 (RNQQVKQPFKDMVKKLLNL) are cytoplasmic.

Belongs to the G-protein coupled receptor 1 family.

The protein localises to the cell membrane. Its function is as follows. Odorant receptor. The chain is Olfactory receptor 2AP1 (OR2AP1) from Homo sapiens (Human).